The sequence spans 323 residues: tRNA-modifying protein YgfZ (323 aa).

Residues Trp29 and Trp182 each coordinate folate.

It belongs to the tRNA-modifying YgfZ family.

It is found in the cytoplasm. Folate-binding protein involved in regulating the level of ATP-DnaA and in the modification of some tRNAs. It is probably a key factor in regulatory networks that act via tRNA modification, such as initiation of chromosomal replication. The protein is tRNA-modifying protein YgfZ of Vibrio cholerae serotype O1 (strain M66-2).